The following is an 881-amino-acid chain: DNA mismatch repair protein MutS (881 aa).

Position 612–619 (Gly-612–Ser-619) interacts with ATP.

Belongs to the DNA mismatch repair MutS family.

This protein is involved in the repair of mismatches in DNA. It is possible that it carries out the mismatch recognition step. This protein has a weak ATPase activity. In Clostridium tetani (strain Massachusetts / E88), this protein is DNA mismatch repair protein MutS.